Reading from the N-terminus, the 367-residue chain is Glutamate 5-kinase (367 aa).

Position 10 (Lys10) interacts with ATP. 2 residues coordinate substrate: Asp137 and Asn149. Residues 169–170 (TD) and 211–217 (TGGMATK) contribute to the ATP site. Positions 275–353 (AGEITVDDGA…QQISEILGYE (79 aa)) constitute a PUA domain.

This sequence belongs to the glutamate 5-kinase family.

The protein localises to the cytoplasm. The catalysed reaction is L-glutamate + ATP = L-glutamyl 5-phosphate + ADP. The protein operates within amino-acid biosynthesis; L-proline biosynthesis; L-glutamate 5-semialdehyde from L-glutamate: step 1/2. Catalyzes the transfer of a phosphate group to glutamate to form L-glutamate 5-phosphate. This chain is Glutamate 5-kinase, found in Yersinia pestis bv. Antiqua (strain Antiqua).